The sequence spans 95 residues: Aspartyl/glutamyl-tRNA(Asn/Gln) amidotransferase subunit C (95 aa).

Belongs to the GatC family. In terms of assembly, heterotrimer of A, B and C subunits.

The enzyme catalyses L-glutamyl-tRNA(Gln) + L-glutamine + ATP + H2O = L-glutaminyl-tRNA(Gln) + L-glutamate + ADP + phosphate + H(+). It catalyses the reaction L-aspartyl-tRNA(Asn) + L-glutamine + ATP + H2O = L-asparaginyl-tRNA(Asn) + L-glutamate + ADP + phosphate + 2 H(+). Functionally, allows the formation of correctly charged Asn-tRNA(Asn) or Gln-tRNA(Gln) through the transamidation of misacylated Asp-tRNA(Asn) or Glu-tRNA(Gln) in organisms which lack either or both of asparaginyl-tRNA or glutaminyl-tRNA synthetases. The reaction takes place in the presence of glutamine and ATP through an activated phospho-Asp-tRNA(Asn) or phospho-Glu-tRNA(Gln). The polypeptide is Aspartyl/glutamyl-tRNA(Asn/Gln) amidotransferase subunit C (Ectopseudomonas mendocina (strain ymp) (Pseudomonas mendocina)).